The following is a 447-amino-acid chain: MTLRSCETFLRRSLRFSTALNLTAFPEHEQLYLRVSSGCSVFRPQTVRKCLFHWTPACTVSQGVFLDRLQKGAAVTDESLCNQPVSVSPDRAQQFSLLMKDPDQPENAKSLKVAIVGSPNAGKSTLTNQLLGRKLFAVSSKVHTTRSRAVGVLTENDTQIVLLDTPGLTTQIKAKRHQLENSLLVDPFKSLKEADLVVVLVDVSDKWTRSKLSYEVLKCLALNPDVPAVLVLNKVDLLKNKALLLDITAQLTEGMVNGKKIRIHGASKPVRKAAAGANSRLKEKKAAGSLEDEADHEDKLKALKSHGGWPHFKDVFMLSSIDHEDVETLKRYLFVAAKPCQWQYHSEVLTDQSPEDVCFNTIREKLLQNLPKEVPYTMTQEIEVWKESEDGVLDISIKLYVQKETHMKMVIGPGGQLITRINQEAGNDLMKIFLCNVRLKISVKLRK.

The transit peptide at 1-18 (MTLRSCETFLRRSLRFST) directs the protein to the mitochondrion. The Era-type G domain occupies 109 to 340 (KSLKVAIVGS…RYLFVAAKPC (232 aa)). The interval 117–124 (GSPNAGKS) is G1. 117 to 124 (GSPNAGKS) lines the GTP pocket. The interval 143–147 (HTTRS) is G2. A G3 region spans residues 164–167 (DTPG). Residues 164–168 (DTPGL) and 233–236 (NKVD) each bind GTP. Positions 233 to 236 (NKVD) are G4. Residues 318–320 (LSS) are G5. One can recognise a KH type-2 domain in the interval 370-447 (LPKEVPYTMT…RLKISVKLRK (78 aa)).

The protein belongs to the TRAFAC class TrmE-Era-EngA-EngB-Septin-like GTPase superfamily. Era GTPase family.

The protein resides in the mitochondrion matrix. Its subcellular location is the mitochondrion inner membrane. Functionally, probable GTPase that plays a role in the mitochondrial ribosomal small subunit assembly. Specifically binds the 12S mitochondrial rRNA (12S mt-rRNA) to a 33 nucleotide section delineating the 3' terminal stem-loop region. May act as a chaperone that protects the 12S mt-rRNA on the 28S mitoribosomal subunit during ribosomal small subunit assembly. This Danio rerio (Zebrafish) protein is GTPase Era, mitochondrial (eral1).